The following is a 382-amino-acid chain: ATP phosphoribosyltransferase regulatory subunit (382 aa).

Belongs to the class-II aminoacyl-tRNA synthetase family. HisZ subfamily. As to quaternary structure, heteromultimer composed of HisG and HisZ subunits.

The protein resides in the cytoplasm. The protein operates within amino-acid biosynthesis; L-histidine biosynthesis; L-histidine from 5-phospho-alpha-D-ribose 1-diphosphate: step 1/9. Required for the first step of histidine biosynthesis. May allow the feedback regulation of ATP phosphoribosyltransferase activity by histidine. This chain is ATP phosphoribosyltransferase regulatory subunit, found in Burkholderia cenocepacia (strain ATCC BAA-245 / DSM 16553 / LMG 16656 / NCTC 13227 / J2315 / CF5610) (Burkholderia cepacia (strain J2315)).